A 286-amino-acid chain; its full sequence is P2R1A-PPP2R2A-interacting phosphatase regulator 1 (286 aa).

The disordered stretch occupies residues 1–46 (MAQEKMELDLELPAGTGASPAEGGGPGSGGLRRSNSAPLIHGLSDS). The residue at position 34 (Ser34) is a Phosphoserine. Ser36 bears the Phosphoserine; by CHEK1 mark. Phosphoserine is present on residues Ser44, Ser47, Ser61, and Ser75. Lys88 participates in a covalent cross-link: Glycyl lysine isopeptide (Lys-Gly) (interchain with G-Cter in SUMO1). 2 positions are modified to phosphoserine: Ser142 and Ser146. The residue at position 148 (Thr148) is a Phosphothreonine. A disordered region spans residues 166 to 187 (SNGLPPSPIPSPTTRFTTRRSQ). The span at 177–187 (PTTRFTTRRSQ) shows a compositional bias: low complexity. 2 positions are modified to phosphoserine: Ser186 and Ser188. The tract at residues 238–286 (VSSDTLDGNSSSAGSSCNSPAKVSTTTDSPVSPAQAASPFIPVDELSSK) is disordered. Residues 245-256 (GNSSSAGSSCNS) show a composition bias toward low complexity. Polar residues predominate over residues 258–269 (AKVSTTTDSPVS). Phosphoserine is present on residues Ser266, Ser269, and Ser275.

This sequence belongs to the FAM122 family. In terms of assembly, interacts with PPP2CA and PPP2R1A. Interacts (via its N-terminus) with PPP2R2A; the interaction is direct and this interaction inhibits PP2A activity. The CHEK1-mediated Ser-36 phosphorylated form interacts with 14-3-3 proteins. Post-translationally, CHEK1-mediated phosphorylation at Ser-36 negatively regulates its ability to inhibit serine/threonine-protein phosphatase 2A (PP2A) activity. Phosphorylation leads to its release from the PP2A complex and its sequestration by 14-3-3 proteins in the cytoplasm resulting in its inability to translocate to the nucleus, where it otherwise inhibits PP2A.

The protein localises to the nucleus. It localises to the cytoplasm. Acts as an inhibitor of serine/threonine-protein phosphatase 2A (PP2A) activity. Inhibits PP2A activity by blocking the substrate binding site on PPP2R2A and the active site of PPP2CA. Potentiates ubiquitin-mediated proteasomal degradation of serine/threonine-protein phosphatase 2A catalytic subunit alpha (PPP2CA). Inhibits PP2A-mediated dephosphorylation of WEE1, promoting ubiquitin-mediated proteolysis of WEE1, thereby releasing G2/M checkpoint. This Rattus norvegicus (Rat) protein is P2R1A-PPP2R2A-interacting phosphatase regulator 1.